We begin with the raw amino-acid sequence, 133 residues long: Small ribosomal subunit protein uS9 (133 aa).

The tract at residues serine 94–arginine 133 is disordered. Residues alanine 95–alanine 113 show a composition bias toward basic and acidic residues. Residues lysine 114–arginine 133 show a composition bias toward basic residues.

It belongs to the universal ribosomal protein uS9 family.

The polypeptide is Small ribosomal subunit protein uS9 (Synechococcus sp. (strain CC9605)).